We begin with the raw amino-acid sequence, 76 residues long: MPSVRSVTCCCLLWMMLSVQLVTPGSPGTAQLSGQRTARSSGSTVCKMMCRLGYGHLYPSCGCRGKRDVVSSSMAV.

Positions 1-24 (MPSVRSVTCCCLLWMMLSVQLVTP) are cleaved as a signal peptide. Positions 25 to 39 (GSPGTAQLSGQRTAR) are excised as a propeptide. 2 cysteine pairs are disulfide-bonded: Cys46-Cys61 and Cys50-Cys63. Residue Arg64 is modified to Arginine amide. Residues 65–76 (GKRDVVSSSMAV) constitute a propeptide that is removed on maturation.

Belongs to the conotoxin J superfamily. Expressed by the venom duct.

It is found in the secreted. Functionally, highly inhibits both nicotinic acetylcholine receptors (neuronal (alpha-3/beta-4) and muscular (alpha-1/beta-1/epsilon/delta) subtypes) and the voltage-gated potassium channel Kv1.6/KCNA6 subtype. In Conus ferrugineus (Cone snail), this protein is Alpha/kappa-conotoxin-like fe14.2.